The chain runs to 728 residues: Ribosome biogenesis protein bop1-B (728 aa).

A disordered region spans residues 1 to 114; sequence MKRGSKRESG…ENDSSDEEDI (114 aa). Positions 50–67 are enriched in acidic residues; it reads SGTDSSDDEEDHSSEEVQ. 7 WD repeats span residues 393-432, 434-474, 514-556, 559-597, 600-639, 643-682, and 698-728; these read GHKDLVRCISVSPSGQWLVSGSDDCSVRFWEVSTGRCMKS, VLEG…RLLC, KHQK…SQNP, KNKGQVQKVLFHPTRPFFFVATQRYVRVYNLLKQELTKK, TNCKWVSSIAVHPAGDNLICGSYDSKLAWFDMDLSTKPYK, HHKKALRAVSFHKSYPLFASGSDDASVIVCHGMVYNDLLQ, and HRDLGVLDVMFHPTQPWVFSSGADGTIRLFT.

This sequence belongs to the WD repeat BOP1/ERB1 family. In terms of assembly, component of the PeBoW complex, composed of bop1, pes1 and wdr12. The complex is held together by bop1, which interacts with pes1 via its N-terminal domain and with wdr12 via a high-affinity interaction between the seven-bladed beta-propeller domains of the 2 proteins. The PeBoW complex associates with the 66S pre-ribosome.

It is found in the nucleus. Its subcellular location is the nucleolus. It localises to the nucleoplasm. Component of the PeBoW complex, which is required for maturation of 28S and 5.8S ribosomal RNAs and formation of the 60S ribosome. The sequence is that of Ribosome biogenesis protein bop1-B (bop1-b) from Xenopus laevis (African clawed frog).